Reading from the N-terminus, the 181-residue chain is Crustacyanin-A1 subunit (181 aa).

3 cysteine pairs are disulfide-bonded: C12/C121, C51/C173, and C117/C150.

It belongs to the calycin superfamily. Lipocalin family. In terms of assembly, oligomer; Can form dimers (beta-crustacyanin); or complexes of 16 subunits (alpha-crustacyanin). There are five types of subunits: A1, A2, A3, C1 and C2. As to expression, found in the carapace.

It is found in the secreted. It localises to the extracellular space. Functionally, binds the carotenoid astaxanthin (AXT) which provides the blue coloration to the carapace of the lobster. The sequence is that of Crustacyanin-A1 subunit from Homarus gammarus (European lobster).